Reading from the N-terminus, the 541-residue chain is Developmental and secondary metabolism regulator VEL1 (541 aa).

The region spanning 26–220 (NRHLWYQLTV…ADQGCRVRIR (195 aa)) is the Velvet domain. A Nuclear localization signal motif is present at residues 40–45 (ERARAC). Disordered stretches follow at residues 222–447 (DVRM…MPTQ) and 464–483 (PIEA…TGGK). Residues 230-244 (GKGSGYDRREEEYAR) are compositionally biased toward basic and acidic residues. Residues 289-298 (APSLPHAPSL) are compositionally biased toward low complexity. Pro residues-rich tracts occupy residues 299–314 (PHAP…PPAA), 345–355 (APIPPVTPTGP), and 425–439 (SPAP…PAPS). Residues 444–472 (MPTQSSLAPLKIASLVSPLPPIEAQTEPL) are PEST.

This sequence belongs to the velvet family. VeA subfamily. In terms of assembly, component of the heterotrimeric velvet complex composed of LAE1, VEL1 and VEL2; VEL1 acting as a bridging protein between LAE1 and VEL2.

It is found in the nucleus. Its subcellular location is the cytoplasm. Component of the velvet transcription factor complex that controls sexual/asexual developmental ratio in response to light, promoting sexual development in the darkness while stimulating asexual sporulation under illumination. The velvet complex acts as a global regulator for secondary metabolite gene expression. Controls the expression of the gliotoxin gene cluster. Plays a key role in mycoparasitism. The protein is Developmental and secondary metabolism regulator VEL1 of Hypocrea virens (strain Gv29-8 / FGSC 10586) (Gliocladium virens).